The chain runs to 117 residues: Hydrogenase maturation factor HypA (117 aa).

H2 lines the Ni(2+) pocket. C73, C76, C92, and C95 together coordinate Zn(2+).

This sequence belongs to the HypA/HybF family.

Functionally, involved in the maturation of [NiFe] hydrogenases. Required for nickel insertion into the metal center of the hydrogenase. The protein is Hydrogenase maturation factor HypA of Solidesulfovibrio magneticus (strain ATCC 700980 / DSM 13731 / RS-1) (Desulfovibrio magneticus).